The following is a 148-amino-acid chain: Lysozyme C (148 aa).

A signal peptide spans 1–18; sequence MKALIVLGLVLLSVTVQG. The 130-residue stretch at 19 to 148 folds into the C-type lysozyme domain; sequence KVFERCELAR…VRQYVQGCGV (130 aa). Intrachain disulfides connect Cys24/Cys146, Cys48/Cys134, Cys83/Cys99, and Cys95/Cys113. Catalysis depends on residues Glu53 and Asp71.

The protein belongs to the glycosyl hydrolase 22 family. As to quaternary structure, monomer.

It localises to the secreted. It catalyses the reaction Hydrolysis of (1-&gt;4)-beta-linkages between N-acetylmuramic acid and N-acetyl-D-glucosamine residues in a peptidoglycan and between N-acetyl-D-glucosamine residues in chitodextrins.. In terms of biological role, lysozymes have primarily a bacteriolytic function; those in tissues and body fluids are associated with the monocyte-macrophage system and enhance the activity of immunoagents. The chain is Lysozyme C (LYZ) from Homo sapiens (Human).